We begin with the raw amino-acid sequence, 67 residues long: DNA-directed RNA polymerase subunit omega (67 aa).

Belongs to the RNA polymerase subunit omega family. As to quaternary structure, the RNAP catalytic core consists of 2 alpha, 1 beta, 1 beta' and 1 omega subunit. When a sigma factor is associated with the core the holoenzyme is formed, which can initiate transcription.

It carries out the reaction RNA(n) + a ribonucleoside 5'-triphosphate = RNA(n+1) + diphosphate. Functionally, promotes RNA polymerase assembly. Latches the N- and C-terminal regions of the beta' subunit thereby facilitating its interaction with the beta and alpha subunits. This is DNA-directed RNA polymerase subunit omega from Nautilia profundicola (strain ATCC BAA-1463 / DSM 18972 / AmH).